The sequence spans 324 residues: G patch domain-containing protein 4 (324 aa).

Disordered stretches follow at residues 1–30 (MSASSVKKSQGMKFAEEQMHKHGWKEGKGL) and 123–324 (LSGG…NKSE). The 47-residue stretch at 11–57 (GMKFAEEQMHKHGWKEGKGLGRRENGICEAIKVKVKCDHAGVGHNSA) folds into the G-patch domain. The span at 14-30 (FAEEQMHKHGWKEGKGL) shows a compositional bias: basic and acidic residues. Positions 131–141 (KEPSSSESSDS) are enriched in low complexity. Residues 186–215 (SRLEEQEREFLAKYGKKEQKNKERDEKLER) are compositionally biased toward basic and acidic residues. The segment covering 244–253 (HKKKKKKRKR) has biased composition (basic residues). Residues 254-270 (ADSERKEESQENGHEEE) are compositionally biased toward basic and acidic residues. Polar residues predominate over residues 296-309 (PSTQEEQPTESSDF). The span at 312–324 (KPKKKKKKKNKSE) shows a compositional bias: basic residues.

The protein is G patch domain-containing protein 4 (gpatch4) of Xenopus laevis (African clawed frog).